A 357-amino-acid chain; its full sequence is Enoyl-[acyl-carrier-protein] reductase, mitochondrial (357 aa).

The transit peptide at 1–19 directs the protein to the mitochondrion; it reads MLRRGFLSRINAAQWSRQM. An Enoyl reductase (ER) domain is found at 36 to 352; the sequence is EVLQLVEDKL…FKGFTGKKYI (317 aa). Tyrosine 74 (proton donor) is an active-site residue. NADP(+)-binding positions include asparagine 147, 173-176, 196-198, 264-267, 289-291, lysine 349, and lysine 350; these read NSAV, RDR, YGGM, and FWM.

Belongs to the zinc-containing alcohol dehydrogenase family. Quinone oxidoreductase subfamily. Homodimer. Expressed in the central nervous system.

The protein localises to the mitochondrion. It catalyses the reaction a 2,3-saturated acyl-[ACP] + NADP(+) = a (2E)-enoyl-[ACP] + NADPH + H(+). Catalyzes the NADPH-dependent reduction of trans-2-enoyl thioesters in mitochondrial fatty acid synthesis (fatty acid synthesis type II). Fatty acid chain elongation in mitochondria uses acyl carrier protein (ACP) as an acyl group carrier, but the enzyme accepts both ACP and CoA thioesters as substrates in vitro. Involved in iron homeostasis; affecting Fe-S cluster assembly and ceramide metabolism. Required for proper morphology and bioenergetic functions of mitochondria. Required for maintenance of neurons, including photoreceptor neurons. This Drosophila melanogaster (Fruit fly) protein is Enoyl-[acyl-carrier-protein] reductase, mitochondrial.